A 232-amino-acid chain; its full sequence is Ribonuclease 3 (232 aa).

One can recognise an RNase III domain in the interval 7–135 (IQAVESKLKF…ILGAVYLDGG (129 aa)). Glu-48 is a binding site for Mg(2+). Asp-52 is a catalytic residue. Mg(2+) contacts are provided by Asn-121 and Glu-124. Residue Glu-124 is part of the active site. Residues 160–229 (NPKNRLQQFT…AKQALSTHDD (70 aa)) form the DRBM domain.

It belongs to the ribonuclease III family. Homodimer. The cofactor is Mg(2+).

It localises to the cytoplasm. The enzyme catalyses Endonucleolytic cleavage to 5'-phosphomonoester.. Functionally, digests double-stranded RNA. Involved in the processing of primary rRNA transcript to yield the immediate precursors to the large and small rRNAs (23S and 16S). Processes some mRNAs, and tRNAs when they are encoded in the rRNA operon. Processes pre-crRNA and tracrRNA of type II CRISPR loci if present in the organism. The chain is Ribonuclease 3 from Chlamydia muridarum (strain MoPn / Nigg).